The following is a 479-amino-acid chain: Phosphatidylinositol 4-kinase type 2-alpha (479 aa).

Methionine 1 bears the N-acetylmethionine mark. Residues methionine 1 to threonine 74 are disordered. Phosphoserine occurs at positions 5, 9, 44, 47, and 51. Over residues valine 31–glycine 45 the composition is skewed to low complexity. The segment covering glycine 53–arginine 66 has biased composition (basic and acidic residues). The PI3K/PI4K catalytic domain occupies cysteine 124–threonine 453. The G-loop stretch occupies residues isoleucine 130–glycine 136. Residues tyrosine 131 to serine 137 and lysine 152 each bind ATP. The important for substrate binding stretch occupies residues glutamate 157 to tyrosine 159. The important for interaction with membranes stretch occupies residues lysine 165 to cysteine 178. Residues cysteine 174, cysteine 175, cysteine 177, and cysteine 178 are each lipidated (S-palmitoyl cysteine). Position 261 to 264 (glutamine 261 to valine 264) interacts with ATP. The interval lysine 268–arginine 276 is important for interaction with membranes. Residues arginine 305–asparagine 313 are catalytic loop. The segment at alanine 344–phenylalanine 364 is activation loop. Aspartate 346 is a binding site for ATP. The important for interaction with membranes stretch occupies residues tryptophan 359 to tryptophan 368. At serine 462 the chain carries Phosphoserine.

Belongs to the PI3/PI4-kinase family. Type II PI4K subfamily. As to quaternary structure, associates with the BLOC-1 and the AP-3 complexes; the BLOC-1 complex is required for optimal binding of PI4K2A to the AP-3 complex. Interacts with BLOC1S5 and DTNBP1. Interacts with FOS; this interaction may enhance phosphatidylinositol phosphorylation activity. Interacts with ITCH. Interacts with ATG9A. Palmitoylated by ZDHHC3 and ZDHHC7 in the CCPCC motif. Palmitoylation is cholesterol-dependent, and required for TGN localization. In terms of processing, ubiquitinated by ITCH; this does not lead to proteasomal degradation. Widely expressed. Highest expression is observed in kidney, brain, heart, skeletal muscle, and placenta and lowest expression is observed in colon, thymus, and small intestine.

Its subcellular location is the golgi apparatus. It is found in the trans-Golgi network membrane. The protein localises to the membrane raft. The protein resides in the cell projection. It localises to the dendrite. Its subcellular location is the presynaptic cell membrane. It is found in the synapse. The protein localises to the synaptosome. The protein resides in the mitochondrion. It localises to the endosome. Its subcellular location is the endosome membrane. It is found in the cytoplasmic vesicle. The protein localises to the membrane. The protein resides in the cell membrane. It localises to the perikaryon. Its subcellular location is the neuron projection. It carries out the reaction a 1,2-diacyl-sn-glycero-3-phospho-(1D-myo-inositol) + ATP = a 1,2-diacyl-sn-glycero-3-phospho-(1D-myo-inositol 4-phosphate) + ADP + H(+). In terms of biological role, membrane-bound phosphatidylinositol-4 kinase (PI4-kinase) that catalyzes the phosphorylation of phosphatidylinositol (PI) to phosphatidylinositol 4-phosphate (PI4P), a lipid that plays important roles in endocytosis, Golgi function, protein sorting and membrane trafficking and is required for prolonged survival of neurons. Besides, phosphorylation of phosphatidylinositol (PI) to phosphatidylinositol 4-phosphate (PI4P) is the first committed step in the generation of phosphatidylinositol 4,5-bisphosphate (PIP2), a precursor of the second messenger inositol 1,4,5-trisphosphate (InsP3). The chain is Phosphatidylinositol 4-kinase type 2-alpha (PI4K2A) from Homo sapiens (Human).